Here is a 576-residue protein sequence, read N- to C-terminus: Beta-bisabolene synthase (576 aa).

(2E,6E)-farnesyl diphosphate-binding residues include Arg-286, Asp-323, Asp-327, Arg-466, and Asn-469. Mg(2+) is bound by residues Asp-323 and Asp-327. A DDXXD motif motif is present at residues 323–327; the sequence is DDVYD. The Mg(2+) site is built by Asn-469, Thr-473, and Glu-477.

The protein belongs to the terpene synthase family. Tpsb subfamily. Requires Mg(2+) as cofactor. It depends on Mn(2+) as a cofactor.

Its function is as follows. Produces almost exclusively beta-bisabolene and only traces of alpha-bisabolol from (2E,6E)-farnesyl diphosphate in fragrance biosynthesis. In Santalum austrocaledonicum (Sandalwood), this protein is Beta-bisabolene synthase.